The primary structure comprises 342 residues: Transmembrane protein 115 homolog (342 aa).

At 1–21 the chain is on the cytoplasmic side; that stretch reads MQYSSRFLELNIPDSFLNINK. A helical transmembrane segment spans residues 22 to 42; that stretch reads IPDATKFITVTYICLTATLFC. Topologically, residues 43 to 121 are lumenal; that stretch reads IRRSLYNKLV…NWNSSKEMFK (79 aa). Residue asparagine 114 is glycosylated (N-linked (GlcNAc...) asparagine). The helical transmembrane segment at 122 to 142 threads the bilayer; the sequence is FIIVLGSLTNVLIIMLTLLVS. The Cytoplasmic segment spans residues 143 to 159; it reads FFSNKVRLDIPLDGNYT. The helical transmembrane segment at 160–180 threads the bilayer; sequence ILIGFPIIYRQLLPETTIIHL. Over 181–207 the chain is Lumenal; it reads KTPQFLAKNFRFKLLPIFVMFTMTVTQ. The chain crosses the membrane as a helical span at residues 208 to 228; it reads IIWFHHFAQLFSIWVTFFASW. Topologically, residues 229-342 are cytoplasmic; it reads SYLRFFQKLA…QVLEERMVNP (114 aa).

It belongs to the TMEM115 family. In terms of assembly, homooligomer.

Its subcellular location is the golgi apparatus membrane. Functionally, may play a role in retrograde transport of proteins from the Golgi to the endoplasmic reticulum. The chain is Transmembrane protein 115 homolog from Saccharomyces cerevisiae (strain ATCC 204508 / S288c) (Baker's yeast).